Here is a 397-residue protein sequence, read N- to C-terminus: 3-hydroxy-3-methylglutaryl-coenzyme A reductase (397 aa).

Residues glutamate 96 and aspartate 301 each act as charge relay system in the active site. Histidine 391 serves as the catalytic Proton donor.

This sequence belongs to the HMG-CoA reductase family.

It catalyses the reaction (R)-mevalonate + 2 NADP(+) + CoA = (3S)-3-hydroxy-3-methylglutaryl-CoA + 2 NADPH + 2 H(+). It functions in the pathway metabolic intermediate biosynthesis; (R)-mevalonate biosynthesis; (R)-mevalonate from acetyl-CoA: step 3/3. Converts HMG-CoA to mevalonate. This chain is 3-hydroxy-3-methylglutaryl-coenzyme A reductase (hmgA), found in Methanothermobacter thermautotrophicus (strain ATCC 29096 / DSM 1053 / JCM 10044 / NBRC 100330 / Delta H) (Methanobacterium thermoautotrophicum).